Reading from the N-terminus, the 376-residue chain is MADQLTPSLDIPAALKPRDGRFGSGPSKVRPEQLQALTNTAATLFGTSHRQAPVKNLVGRVRAGLAELFSLPDGYQVILGNGGATAFWDAAAFGLIDKRSLHLTYGEFSSKFASAVAKNPFIDEPIVIKSDPGSAPKPTGDPSVDVIAWAHNETSTGVAVPVRRPTGSGGALIAIDATSGAGGLPVDIAQTDAYYFAPQKNFASDGGLWLAIMSPAALARVDSITASGRWVPDFLSLPIAVENSLKNQTYNTPAICTLALLAEQLDWLLGNGGLEWAVKRTADSSQRLYAWAEDRPYTTPFVVDPALRSQVVGTIDFTDDVDAAAVAKILRANGIIDTEPYRKLGRNQLRVAMFPAVEPDDVRALTECVDWIVERL.

The segment at 1-30 is disordered; the sequence is MADQLTPSLDIPAALKPRDGRFGSGPSKVR. Arginine 50 lines the L-glutamate pocket. Residues 84–85, phenylalanine 108, threonine 154, aspartate 176, and glutamine 199 contribute to the pyridoxal 5'-phosphate site; that span reads AT. Lysine 200 bears the N6-(pyridoxal phosphate)lysine mark. Residue 251–252 participates in pyridoxal 5'-phosphate binding; that stretch reads NT.

Belongs to the class-V pyridoxal-phosphate-dependent aminotransferase family. SerC subfamily. In terms of assembly, homodimer. Requires pyridoxal 5'-phosphate as cofactor.

It is found in the cytoplasm. It carries out the reaction O-phospho-L-serine + 2-oxoglutarate = 3-phosphooxypyruvate + L-glutamate. It catalyses the reaction 4-(phosphooxy)-L-threonine + 2-oxoglutarate = (R)-3-hydroxy-2-oxo-4-phosphooxybutanoate + L-glutamate. Its pathway is amino-acid biosynthesis; L-serine biosynthesis; L-serine from 3-phospho-D-glycerate: step 2/3. It participates in cofactor biosynthesis; pyridoxine 5'-phosphate biosynthesis; pyridoxine 5'-phosphate from D-erythrose 4-phosphate: step 3/5. Its function is as follows. Catalyzes the reversible conversion of 3-phosphohydroxypyruvate to phosphoserine and of 3-hydroxy-2-oxo-4-phosphonooxybutanoate to phosphohydroxythreonine. This chain is Putative phosphoserine aminotransferase, found in Mycobacterium leprae (strain TN).